A 283-amino-acid polypeptide reads, in one-letter code: Adenylate kinase 2, chloroplastic (283 aa).

A chloroplast-targeting transit peptide spans 1-59 (MTGCVNSISPPPVTLYRHRASPSRSSFSLSGDALHSLYRHRRVSRSPSIIAPKFQIVAA). 74–79 (ASGKGT) serves as a coordination point for ATP. The segment at 94–123 (SAGDLLRAEIASGSENGRRAKEHMEKGQLV) is NMP. AMP-binding positions include Arg-100, 121-123 (QLV), 150-153 (GYPR), and Gln-157. An LID region spans residues 187–220 (GRRLDPVTGKIYHLKYSPPETEEIAVRLTQRFDD). Arg-188 contacts ATP. Residues Arg-217 and Arg-228 each contribute to the AMP site.

This sequence belongs to the adenylate kinase family. In terms of assembly, monomer.

It is found in the plastid. It localises to the chloroplast stroma. The catalysed reaction is AMP + ATP = 2 ADP. Catalyzes the reversible transfer of the terminal phosphate group between ATP and AMP. Plays an important role in cellular energy homeostasis and in adenine nucleotide metabolism. Plays a major role in the equilibration of adenylates and de novo synthesis of ADP in the plastid stroma. This is Adenylate kinase 2, chloroplastic from Arabidopsis thaliana (Mouse-ear cress).